Reading from the N-terminus, the 222-residue chain is GTP cyclohydrolase 1 (222 aa).

Zn(2+)-binding residues include cysteine 111, histidine 114, and cysteine 182.

Belongs to the GTP cyclohydrolase I family. In terms of assembly, toroid-shaped homodecamer, composed of two pentamers of five dimers.

The catalysed reaction is GTP + H2O = 7,8-dihydroneopterin 3'-triphosphate + formate + H(+). It participates in cofactor biosynthesis; 7,8-dihydroneopterin triphosphate biosynthesis; 7,8-dihydroneopterin triphosphate from GTP: step 1/1. The polypeptide is GTP cyclohydrolase 1 (Klebsiella pneumoniae subsp. pneumoniae (strain ATCC 700721 / MGH 78578)).